The primary structure comprises 148 residues: Large-conductance mechanosensitive channel (148 aa).

The next 2 membrane-spanning stretches (helical) occupy residues 16–36 (VMDLAVGVIIGGAFSTIVNSI) and 89–109 (GSFITVLINFLILAFIIFLMV).

This sequence belongs to the MscL family. Homopentamer.

It is found in the cell inner membrane. Its function is as follows. Channel that opens in response to stretch forces in the membrane lipid bilayer. May participate in the regulation of osmotic pressure changes within the cell. The protein is Large-conductance mechanosensitive channel of Paraburkholderia xenovorans (strain LB400).